Here is a 91-residue protein sequence, read N- to C-terminus: Large ribosomal subunit protein eL34 (91 aa).

It belongs to the eukaryotic ribosomal protein eL34 family.

This is Large ribosomal subunit protein eL34 from Thermofilum pendens (strain DSM 2475 / Hrk 5).